We begin with the raw amino-acid sequence, 123 residues long: NADH-quinone oxidoreductase subunit A (123 aa).

3 consecutive transmembrane segments (helical) span residues 11–31 (FPVLMFLLVGTGLGVALVSIG), 67–87 (LVAILFIIFDLETAFLFPWGV), and 92–112 (IGWPGFISMMIFLLEFLLGFA).

It belongs to the complex I subunit 3 family. In terms of assembly, NDH-1 is composed of 14 different subunits. Subunits NuoA, H, J, K, L, M, N constitute the membrane sector of the complex.

The protein resides in the cell inner membrane. It carries out the reaction a quinone + NADH + 5 H(+)(in) = a quinol + NAD(+) + 4 H(+)(out). Its function is as follows. NDH-1 shuttles electrons from NADH, via FMN and iron-sulfur (Fe-S) centers, to quinones in the respiratory chain. The immediate electron acceptor for the enzyme in this species is believed to be ubiquinone. Couples the redox reaction to proton translocation (for every two electrons transferred, four hydrogen ions are translocated across the cytoplasmic membrane), and thus conserves the redox energy in a proton gradient. This Paraburkholderia phymatum (strain DSM 17167 / CIP 108236 / LMG 21445 / STM815) (Burkholderia phymatum) protein is NADH-quinone oxidoreductase subunit A.